The sequence spans 586 residues: Eukaryotic translation initiation factor 2A (586 aa).

3 WD repeats span residues 23–63 (PSFT…NIVN), 125–163 (QKKM…TIAN), and 356–401 (VASD…HNYE). The disordered stretch occupies residues 434-531 (ELPSAEPKPA…SAVPVVTSGD (98 aa)). The segment covering 470–479 (MKPQSGSSEK) has biased composition (polar residues). Residues 495–506 (KKAAKQEAKADC) are compositionally biased toward basic and acidic residues. Positions 507–521 (SQESTQSSASQNTPR) are enriched in polar residues. Residues 532–583 (PEIDKKIKNLKKKLKAIEQLKEQAAAGKQLEKNQLEKIQKESALLQELEDLE) are a coiled coil.

The protein belongs to the WD repeat EIF2A family.

Functionally, functions in the early steps of protein synthesis of a small number of specific mRNAs. Acts by directing the binding of methionyl-tRNAi to 40S ribosomal subunits. In contrast to the eIF-2 complex, it binds methionyl-tRNAi to 40S subunits in a codon-dependent manner, whereas the eIF-2 complex binds methionyl-tRNAi to 40S subunits in a GTP-dependent manner. The chain is Eukaryotic translation initiation factor 2A (EIF2A) from Gallus gallus (Chicken).